Consider the following 451-residue polypeptide: Trimethylamine monooxygenase (451 aa).

Residues Ser12, Glu37, Gln39, Leu45, Trp46, and His62 each coordinate FAD. Positions 70 and 72 each coordinate NADP(+). The FAD site is built by Asn72 and Val125. Ser204, Ser205, Ser207, and Arg228 together coordinate NADP(+). Positions 317 and 320 each coordinate FAD. Arg411 contributes to the NADP(+) binding site.

The protein belongs to the FMO family. It depends on FAD as a cofactor.

The catalysed reaction is trimethylamine + NADPH + O2 = trimethylamine N-oxide + NADP(+) + H2O. In terms of biological role, catalyzes the oxidation of trimethylamine (TMA) to produce trimethylamine N-oxide (TMAO). In vitro, has a broad substrate specificity, oxidizing many nitrogen- and sulfur-containing compounds, including dimethylamine (DMA), dimethylsulfide (DMS), dimethylsulfoxide (DMSO), cysteamine, methimazole and dimethylaniline. This is Trimethylamine monooxygenase from Methylocella silvestris (strain DSM 15510 / CIP 108128 / LMG 27833 / NCIMB 13906 / BL2).